A 109-amino-acid chain; its full sequence is Homeobox protein E30 (109 aa).

A compositionally biased stretch (basic residues) spans 1-12 (GPRTRRVKRSHN). Residues 1-27 (GPRTRRVKRSHNGKNGSPEEKRPRTAF) form a disordered region. A DNA-binding region (homeobox) is located at residues 20–79 (EKRPRTAFSAEQLARLKREFAENRYLTERRRQQLSRDLGLTEAQIKIWFQNKRAKIKKAS).

It belongs to the engrailed homeobox family.

The protein localises to the nucleus. The sequence is that of Homeobox protein E30 from Apis mellifera (Honeybee).